The primary structure comprises 1171 residues: Myosin-B/C (1171 aa).

The 676-residue stretch at 105 to 780 (ETVDDIGYLP…AAKELSILQR (676 aa)) folds into the Myosin motor domain. 199-206 (GESGAGKT) provides a ligand contact to ATP. The tract at residues 671-681 (AHFIRCLKPNE) is actin-binding. Residues 810–1171 (IHFLTRLESN…CFEACAPDRP (362 aa)) form a tail region.

Belongs to the TRAFAC class myosin-kinesin ATPase superfamily. Myosin family.

It localises to the cytoplasm. Functionally, myosins are actin-based motor molecules with ATPase activity. Unconventional myosins serve in intracellular movements. Their highly divergent tails are presumed to bind to membranous compartments, which would be moved relative to actin filaments. Plays a role in proper daughter cell budding and separation. The chain is Myosin-B/C from Toxoplasma gondii.